Here is a 547-residue protein sequence, read N- to C-terminus: Type I inositol polyphosphate 5-phosphatase 4 (547 aa).

Over residues 56 to 67 (CSVRKSKTETRS) the composition is skewed to basic and acidic residues. A disordered region spans residues 56–80 (CSVRKSKTETRSKRNSGRARRNKLD). 2 catalytic regions span residues 387-402 (DRVIWLGDLNYRIALS) and 467-482 (KRRTPAWCDRILWHGS).

It belongs to the inositol polyphosphate 5-phosphatase family.

This Arabidopsis thaliana (Mouse-ear cress) protein is Type I inositol polyphosphate 5-phosphatase 4.